A 193-amino-acid polypeptide reads, in one-letter code: Potassium-transporting ATPase KdpC subunit (193 aa).

Residues 8-28 traverse the membrane as a helical segment; sequence VVLLIFLTLITGVAYPLLATG.

Belongs to the KdpC family. In terms of assembly, the system is composed of three essential subunits: KdpA, KdpB and KdpC.

The protein resides in the cell inner membrane. Functionally, part of the high-affinity ATP-driven potassium transport (or Kdp) system, which catalyzes the hydrolysis of ATP coupled with the electrogenic transport of potassium into the cytoplasm. This subunit acts as a catalytic chaperone that increases the ATP-binding affinity of the ATP-hydrolyzing subunit KdpB by the formation of a transient KdpB/KdpC/ATP ternary complex. The polypeptide is Potassium-transporting ATPase KdpC subunit (Photorhabdus laumondii subsp. laumondii (strain DSM 15139 / CIP 105565 / TT01) (Photorhabdus luminescens subsp. laumondii)).